The chain runs to 212 residues: Imidazole glycerol phosphate synthase subunit HisH (212 aa).

The 210-residue stretch at 3–212 folds into the Glutamine amidotransferase type-1 domain; that stretch reads SIAVVDYGMG…LLSNFLKWTP (210 aa). The active-site Nucleophile is Cys82. Catalysis depends on residues His192 and Glu194.

As to quaternary structure, heterodimer of HisH and HisF.

Its subcellular location is the cytoplasm. The enzyme catalyses 5-[(5-phospho-1-deoxy-D-ribulos-1-ylimino)methylamino]-1-(5-phospho-beta-D-ribosyl)imidazole-4-carboxamide + L-glutamine = D-erythro-1-(imidazol-4-yl)glycerol 3-phosphate + 5-amino-1-(5-phospho-beta-D-ribosyl)imidazole-4-carboxamide + L-glutamate + H(+). It catalyses the reaction L-glutamine + H2O = L-glutamate + NH4(+). Its pathway is amino-acid biosynthesis; L-histidine biosynthesis; L-histidine from 5-phospho-alpha-D-ribose 1-diphosphate: step 5/9. In terms of biological role, IGPS catalyzes the conversion of PRFAR and glutamine to IGP, AICAR and glutamate. The HisH subunit catalyzes the hydrolysis of glutamine to glutamate and ammonia as part of the synthesis of IGP and AICAR. The resulting ammonia molecule is channeled to the active site of HisF. This Nitrosomonas europaea (strain ATCC 19718 / CIP 103999 / KCTC 2705 / NBRC 14298) protein is Imidazole glycerol phosphate synthase subunit HisH.